A 542-amino-acid chain; its full sequence is Pre-mRNA-splicing factor 38B (542 aa).

Residues 1-12 are compositionally biased toward polar residues; that stretch reads MANNSPALTGNS. The tract at residues 1 to 41 is disordered; it reads MANNSPALTGNSQPQHQAAAAVTQQQQQCGGGGGATKPAVS. Alanine 2 is modified (N-acetylalanine). At serine 5 the chain carries Phosphoserine. Residues 13-28 are compositionally biased toward low complexity; it reads QPQHQAAAAVTQQQQQ. Lysine 228 is modified (N6-acetyllysine). Residues 233–542 form a disordered region; it reads QIKTRPRKIK…KEHKSKDETV (310 aa). Over residues 244–256 the composition is skewed to basic and acidic residues; that stretch reads DGKEGIEEIDRHV. A compositionally biased stretch (basic residues) spans 257–285; it reads ERRRSRSPRRSLSPRRSPRRSRSRSHHRE. Phosphoserine occurs at positions 289, 291, 319, and 321. A compositionally biased stretch (basic and acidic residues) spans 292–328; the sequence is FDRELEREKERQRLEREAKEREKERRRSRSIDRGLDR. A coiled-coil region spans residues 293 to 322; sequence DRELEREKERQRLEREAKEREKERRRSRSI. Over residues 329–345 the composition is skewed to basic residues; the sequence is RRSRSRERHRSRSRSRD. Positions 346–419 are enriched in basic and acidic residues; it reads RKGDRRDRDR…DRRHRDDKKE (74 aa). The segment covering 420 to 447 has biased composition (basic residues); it reads SKKKHSRSRSRERKHRSRSRNAGKRSRS. At serine 445 the chain carries Phosphoserine. A compositionally biased stretch (basic and acidic residues) spans 448–465; it reads RSKDKSSRHKNESKEKAN. Phosphoserine is present on residues serine 470, serine 472, and serine 478. Composition is skewed to basic and acidic residues over residues 478–491 and 498–520; these read SVEK…PSRE and RSQD…RQDH. Phosphoserine is present on residues serine 523, serine 525, and serine 530. Positions 530-542 are enriched in basic and acidic residues; it reads SQEKEHKSKDETV.

This sequence belongs to the PRP38 family.

It is found in the nucleus. Functionally, may be required for pre-mRNA splicing. The chain is Pre-mRNA-splicing factor 38B (Prpf38b) from Mus musculus (Mouse).